The chain runs to 487 residues: Polyamine oxidase 4 (487 aa).

FAD-binding residues include Glu-53, Arg-61, Val-242, and Glu-429. Positions 485–487 (CRT) match the Microbody targeting signal motif.

This sequence belongs to the flavin monoamine oxidase family. FAD is required as a cofactor. As to expression, widely expressed.

The protein localises to the peroxisome. It carries out the reaction spermine + O2 + H2O = 3-aminopropanal + spermidine + H2O2. The catalysed reaction is norspermine + O2 + H2O = norspermidine + 3-aminopropanal + H2O2. It catalyses the reaction thermospermine + O2 + H2O = 3-aminopropanal + spermidine + H2O2. Its pathway is amine and polyamine degradation; spermine degradation. In terms of biological role, flavoenzyme involved in polyamine back-conversion. Catalyzes the oxidation of the secondary amino group of polyamines, such as spermine. Substrate preference is spermine &gt; thermospermine &gt; norspermine. No activity detected when putrescine, spermidine or N(1)-acetylspermidine are used as substrates. Plays an important role in the regulation of polyamine intracellular concentration. This Oryza sativa subsp. japonica (Rice) protein is Polyamine oxidase 4.